The primary structure comprises 295 residues: NADPH-dependent reductive aminase (295 aa).

An N-terminal signal peptide occupies residues 1 to 18 (MSKHIGIFGLGAMGTALA). 6–20 (GIFGLGAMGTALAAK) contacts NADP(+).

Belongs to the HIBADH-related family. In terms of assembly, homodimer. NADPH is required as a cofactor.

NADPH-dependent reductive aminase that catalyzes the reductive coupling of a broad set of carbonyl compounds with a variety of primary and secondary amines. Possesses remarkably high activity for the reductive amination of ketones and amines, often with high stereoselectivity and in some cases with ketone:amine ratios as low as 1:1. The cofactor NADPH, the carbonyl compound and the amine are added to the enzyme in that sequence, followed by the release of product, NADP(+) being released at last. RedAm is also able to act in the reverse, oxidative direction and exhibits activity in the dehydrogenation of amines to yield imines. The highest activity is found for 1-methyl-tetrahydroquinoline and acyclic amines are also found to be transformed. The protein is NADPH-dependent reductive aminase of Aspergillus oryzae (strain ATCC 42149 / RIB 40) (Yellow koji mold).